Consider the following 881-residue polypeptide: Mechanosensitive ion channel protein 5 (881 aa).

2 stretches are compositionally biased toward basic and acidic residues: residues 1 to 12 (MAAVDSTDRRDF) and 48 to 59 (DGEKGKNDKKGD). The disordered stretch occupies residues 1-248 (MAAVDSTDRR…RNGFEEEEEE (248 aa)). The segment covering 115–145 (ELQSNTPPRPATASNTPRRGLTTISESSSPV) has biased composition (polar residues). Positions 169–179 (EEGRNRDEAEV) are enriched in basic and acidic residues. Ser231 is subject to Phosphoserine. Helical transmembrane passes span 265-285 (LSFWVFLEWISLVLIVTSLVC), 309-329 (VLVLICGRLVSSWIVRIIVFL), 349-369 (KSVQNCLWLGLVLLAWHFLFD), 387-407 (VLVCLLVALIIWLVKTILVKV), 642-662 (IINVVIGIIIIIIWLLILGIA), and 677-697 (VAFVFGNSCKTIFEAIIFLFV). The segment at 861–881 (PTANPTSSDRIPPSWMQQRGP) is disordered. The segment covering 864–881 (NPTSSDRIPPSWMQQRGP) has biased composition (polar residues).

It belongs to the MscS (TC 1.A.23) family.

The protein resides in the membrane. Mechanosensitive channel that opens in response to stretch forces in the membrane lipid bilayer. In Arabidopsis thaliana (Mouse-ear cress), this protein is Mechanosensitive ion channel protein 5 (MSL5).